Reading from the N-terminus, the 439-residue chain is Serine hydroxymethyltransferase (439 aa).

127–129 (AHV) contacts (6S)-5,6,7,8-tetrahydrofolate. Lys233 carries the post-translational modification N6-(pyridoxal phosphate)lysine.

Belongs to the SHMT family. As to quaternary structure, homodimer. Requires pyridoxal 5'-phosphate as cofactor.

Its subcellular location is the cytoplasm. It functions in the pathway amino-acid biosynthesis; glycine biosynthesis; glycine from L-serine: step 1/1. Catalyzes the reversible interconversion of serine and glycine with a modified folate serving as the one-carbon carrier. Also exhibits a pteridine-independent aldolase activity toward beta-hydroxyamino acids, producing glycine and aldehydes, via a retro-aldol mechanism. The protein is Serine hydroxymethyltransferase of Aeropyrum pernix (strain ATCC 700893 / DSM 11879 / JCM 9820 / NBRC 100138 / K1).